We begin with the raw amino-acid sequence, 1238 residues long: Virulence sensor protein BvgS (1238 aa).

The N-terminal stretch at Met1–Ala30 is a signal peptide. The Cytoplasmic portion of the chain corresponds to Ser33–Pro307. The helical transmembrane segment at Val308–Gly331 threads the bilayer. Over Ile332–Glu541 the chain is Periplasmic. A helical membrane pass occupies residues Ile542 to Leu563. The Cytoplasmic segment spans residues Arg564 to Pro1238. One can recognise a PAS domain in the interval Gln580–Ser651. A PAC domain is found at Ala652–Asp708. The Histidine kinase domain occupies Thr726–Met948. His729 bears the Phosphohistidine; by autocatalysis mark. Positions Arg974–Ala1095 constitute a Response regulatory domain. Asp1023 carries the 4-aspartylphosphate modification. The 96-residue stretch at Asp1133 to Trp1228 folds into the HPt domain. His1172 bears the Phosphohistidine mark.

In terms of processing, activation requires a sequential transfer of a phosphate group from a His in the primary transmitter domain, to an Asp in the receiver domain and to a His in the secondary transmitter domain.

The protein resides in the cell inner membrane. It carries out the reaction ATP + protein L-histidine = ADP + protein N-phospho-L-histidine.. In terms of biological role, member of the two-component regulatory system BvgS/BvgA. Phosphorylates BvgA via a four-step phosphorelay in response to environmental signals. This Bordetella bronchiseptica (strain ATCC BAA-588 / NCTC 13252 / RB50) (Alcaligenes bronchisepticus) protein is Virulence sensor protein BvgS (bvgS).